Consider the following 327-residue polypeptide: rRNA 2'-O-methyltransferase fibrillarin (327 aa).

The disordered stretch occupies residues 1 to 96; that stretch reads MGTDYRNSGR…GFKGGAKTMV (96 aa). Asymmetric dimethylarginine is present on residues arginine 10, arginine 19, arginine 44, arginine 49, arginine 55, arginine 65, arginine 69, and arginine 78. Over residues 22–56 the composition is skewed to basic and acidic residues; the sequence is GNDRRDSGRSFGDRRPERPDFKRGDGGRGFGDRRG. The span at 73-90 shows a compositional bias: gly residues; that stretch reads DGPGGRGGPGGPGGGFKG. S-adenosyl-L-methionine is bound by residues 181 to 182, 200 to 201, 225 to 226, and 245 to 248; these read TT, EF, DA, and DVAQ.

The protein belongs to the methyltransferase superfamily. Fibrillarin family. Component of box C/D small nucleolar ribonucleoprotein (snoRNP) particles. It is associated with the U3, U8 and U13 small nuclear RNAs. By homology to other fibrillarins, some or all of the N-terminal domain arginines are modified to asymmetric dimethylarginine (DMA).

It is found in the nucleus. It localises to the nucleolus. It catalyses the reaction L-glutaminyl-[histone H2A] + S-adenosyl-L-methionine = N(5)-methyl-L-glutaminyl-[histone H2A] + S-adenosyl-L-homocysteine + H(+). S-adenosyl-L-methionine-dependent methyltransferase that has the ability to methylate both RNAs and proteins. Involved in pre-rRNA processing. Utilizes the methyl donor S-adenosyl-L-methionine to catalyze the site-specific 2'-hydroxyl methylation of ribose moieties in pre-ribosomal RNA. Site specificity is provided by a guide RNA that base pairs with the substrate. Methylation occurs at a characteristic distance from the sequence involved in base pairing with the guide RNA. Also acts as a protein methyltransferase by mediating methylation of 'Gln-105' of histone H2A (H2AQ105me), a modification that impairs binding of the FACT complex and is specifically present at 35S ribosomal DNA locus. In Giardia intestinalis (Giardia lamblia), this protein is rRNA 2'-O-methyltransferase fibrillarin.